A 524-amino-acid chain; its full sequence is Serine/threonine-protein phosphatase 2A 56 kDa regulatory subunit gamma isoform (524 aa).

The residue at position 1 (M1) is an N-acetylmethionine. The Nuclear localization signal motif lies at 472–489 (RKTVSDEARQAQKDPKKE). A disordered region spans residues 476–524 (SDEARQAQKDPKKERPLARRKSELPQDPHTKKALEAHCRADELVPQDGR).

The protein belongs to the phosphatase 2A regulatory subunit B56 family. In terms of assembly, PP2A consists of a common heterodimeric core enzyme, composed of PPP2CA a 36 kDa catalytic subunit (subunit C) and PPP2R1A a 65 kDa constant regulatory subunit (PR65 or subunit A), that associates with a variety of regulatory subunits. Proteins that associate with the core dimer include three families of regulatory subunits B (the R2/B/PR55/B55, R3/B''/PR72/PR130/PR59 and R5/B'/B56 families), the 48 kDa variable regulatory subunit, viral proteins, and cell signaling molecules. Interacts with SGO1. Interacts with SGO1; the interaction is direct. May interact with TP53. Interacts with IER3 and/or ERK kinases; regulates ERK dephosphorylation Interacts with CIP2A; this interaction stabilizes CIP2A. As to expression, highly expressed in testis, heart and spleen. Also found in brain and skeletal muscle.

Its subcellular location is the nucleus. The protein localises to the chromosome. It localises to the centromere. In terms of biological role, the B regulatory subunit might modulate substrate selectivity and catalytic activity, and might also direct the localization of the catalytic enzyme to a particular subcellular compartment. The PP2A-PPP2R5C holoenzyme may activate TP53 and play a role in DNA damage-induced inhibition of cell proliferation. PP2A-PPP2R5C may also regulate the ERK signaling pathway through ERK dephosphorylation. This Oryctolagus cuniculus (Rabbit) protein is Serine/threonine-protein phosphatase 2A 56 kDa regulatory subunit gamma isoform (PPP2R5C).